A 190-amino-acid polypeptide reads, in one-letter code: MKLVHMASGLAVAIALAACADKSADIQTPAPAANTSISATQQPAIQQPNVSGTVWIRQKVALPPDAVLTVTLSDASLADAPSKVLAQKAVRTEGKQSPFSFVLSFNPADVQPNARILLSAAITVNDKLVFITDTVQPVINQGGTKADLTLVPVQQTAVPVQASGGATTTVPSTSPTQVNPSSAVPAPTQY.

The signal sequence occupies residues 1–18 (MKLVHMASGLAVAIALAA). A lipid anchor (N-palmitoyl cysteine) is attached at Cys-19. A lipid anchor (S-diacylglycerol cysteine) is attached at Cys-19. Over residues 162 to 182 (ASGGATTTVPSTSPTQVNPSS) the composition is skewed to low complexity. A disordered region spans residues 162 to 190 (ASGGATTTVPSTSPTQVNPSSAVPAPTQY).

It localises to the cell membrane. This is an uncharacterized protein from Escherichia coli (strain K12).